The following is a 1622-amino-acid chain: FK506-binding protein 5 (1622 aa).

The 92-residue stretch at 178–269 (GDRVSIKYAG…IFDLEVTGSK (92 aa)) folds into the PPIase FKBP-type domain. Residues 268 to 306 (SKKKEGSEPSLPSLNGQPSNAPQQSLPTQLFDNSPVPQD) are disordered. Residues 277 to 303 (SLPSLNGQPSNAPQQSLPTQLFDNSPV) are compositionally biased toward polar residues. R314 carries the post-translational modification Omega-N-methylarginine. Disordered stretches follow at residues 320–432 (RATG…GFNN) and 518–538 (SPPP…PPPP). Positions 335 to 432 (ESNSRNSHSN…NMNNNNGFNN (98 aa)) are enriched in low complexity. 2 coiled-coil regions span residues 607–827 (LVQT…ETER) and 854–961 (KKEE…LESQ). Disordered stretches follow at residues 1043-1097 (KQQQ…EVVV) and 1122-1622 (EEVK…VLPL). 2 stretches are compositionally biased toward acidic residues: residues 1050-1093 (KEEE…EEEK) and 1152-1168 (DDED…DINE). Over residues 1169–1182 (EDLKNIDAEIEKMQ) the composition is skewed to basic and acidic residues. 2 stretches are compositionally biased toward acidic residues: residues 1185-1199 (MGDE…EEEK) and 1222-1260 (ESEE…EQED). Over residues 1261–1271 (KVESDVEEKIV) the composition is skewed to basic and acidic residues. The span at 1320–1335 (DDDEDNEKDVASDSEE) shows a compositional bias: acidic residues. Residues 1353–1369 (EEKVVEQVKEEINETKF) show a composition bias toward basic and acidic residues. A compositionally biased stretch (acidic residues) spans 1380–1412 (TTTEEKEEEKEEEKVEEEEEKVVEPPTIDDDET). 2 stretches are compositionally biased toward low complexity: residues 1435-1449 (STTA…TSST) and 1465-1504 (KTSF…TPTS). Composition is skewed to polar residues over residues 1519-1532 (FGNS…PSTT) and 1581-1609 (AKSN…SPLT).

The protein belongs to the FKBP-type PPIase family.

The enzyme catalyses [protein]-peptidylproline (omega=180) = [protein]-peptidylproline (omega=0). With respect to regulation, inhibited by both FK506 and rapamycin. Functionally, PPIases accelerate the folding of proteins by catalyzing the cis-trans isomerization of proline imidic peptide bonds in oligopeptides. The protein is FK506-binding protein 5 (fkbp5) of Dictyostelium discoideum (Social amoeba).